Consider the following 84-residue polypeptide: Large ribosomal subunit protein bL27 (84 aa).

The tract at residues 1–20 (MAHKKGGGSTKNGRDSNPKY) is disordered.

Belongs to the bacterial ribosomal protein bL27 family.

The protein is Large ribosomal subunit protein bL27 of Chlorobaculum tepidum (strain ATCC 49652 / DSM 12025 / NBRC 103806 / TLS) (Chlorobium tepidum).